Here is a 375-residue protein sequence, read N- to C-terminus: DNA replication and repair protein RecF (375 aa).

30 to 37 (GENAQGKT) contacts ATP.

Belongs to the RecF family.

The protein localises to the cytoplasm. Its function is as follows. The RecF protein is involved in DNA metabolism; it is required for DNA replication and normal SOS inducibility. RecF binds preferentially to single-stranded, linear DNA. It also seems to bind ATP. In Latilactobacillus sakei subsp. sakei (strain 23K) (Lactobacillus sakei subsp. sakei), this protein is DNA replication and repair protein RecF.